Here is a 207-residue protein sequence, read N- to C-terminus: Guanylate kinase (207 aa).

The Guanylate kinase-like domain maps to 4–184; that stretch reads GTLYIVSAPS…ALSDLKTIIR (181 aa). 11-18 serves as a coordination point for ATP; that stretch reads APSGAGKS.

It belongs to the guanylate kinase family.

The protein localises to the cytoplasm. It carries out the reaction GMP + ATP = GDP + ADP. Functionally, essential for recycling GMP and indirectly, cGMP. The protein is Guanylate kinase (gmk) of Salmonella typhimurium (strain LT2 / SGSC1412 / ATCC 700720).